A 205-amino-acid polypeptide reads, in one-letter code: Small ribosomal subunit protein uS4 (205 aa).

Residues 18-46 (NIWGRPKSPVNRREYGPGQHGQRRKGKLS) are disordered. Positions 94-154 (RRLDTVVFRA…EASKQLAVVL (61 aa)) constitute an S4 RNA-binding domain.

The protein belongs to the universal ribosomal protein uS4 family. Part of the 30S ribosomal subunit. Contacts protein S5. The interaction surface between S4 and S5 is involved in control of translational fidelity.

One of the primary rRNA binding proteins, it binds directly to 16S rRNA where it nucleates assembly of the body of the 30S subunit. Its function is as follows. With S5 and S12 plays an important role in translational accuracy. This Bradyrhizobium sp. (strain ORS 278) protein is Small ribosomal subunit protein uS4.